The chain runs to 275 residues: uncharacterized protein (275 aa).

[4Fe-4S] cluster-binding residues include Cys-97, Cys-102, Cys-136, and Cys-140. Residue Cys-140 participates in siroheme binding.

It belongs to the nitrite and sulfite reductase 4Fe-4S domain family.

This is an uncharacterized protein from Methanocaldococcus jannaschii (strain ATCC 43067 / DSM 2661 / JAL-1 / JCM 10045 / NBRC 100440) (Methanococcus jannaschii).